A 564-amino-acid chain; its full sequence is Lamassu protein LmuB (564 aa).

Its function is as follows. Component of antiviral defense system Lamassu type II, composed of LmuA and LmuB. Expression of Lamassu type II in B.subtilis (strain BEST7003) confers resistance to phage SpBeta. May be an ATPase. This chain is Lamassu protein LmuB, found in Bacillus cereus (strain VD014).